The sequence spans 119 residues: Putative phosphoethanolamine transferase YjgX (119 aa).

Helical transmembrane passes span V5–W25 and L94–Y114.

Belongs to the phosphoethanolamine transferase family.

It localises to the cell inner membrane. The sequence is that of Putative phosphoethanolamine transferase YjgX (yjgX) from Escherichia coli (strain K12).